Reading from the N-terminus, the 252-residue chain is Imidazole glycerol phosphate synthase subunit HisF (252 aa).

Active-site residues include aspartate 11 and aspartate 130.

Belongs to the HisA/HisF family. As to quaternary structure, heterodimer of HisH and HisF.

It localises to the cytoplasm. It catalyses the reaction 5-[(5-phospho-1-deoxy-D-ribulos-1-ylimino)methylamino]-1-(5-phospho-beta-D-ribosyl)imidazole-4-carboxamide + L-glutamine = D-erythro-1-(imidazol-4-yl)glycerol 3-phosphate + 5-amino-1-(5-phospho-beta-D-ribosyl)imidazole-4-carboxamide + L-glutamate + H(+). It participates in amino-acid biosynthesis; L-histidine biosynthesis; L-histidine from 5-phospho-alpha-D-ribose 1-diphosphate: step 5/9. IGPS catalyzes the conversion of PRFAR and glutamine to IGP, AICAR and glutamate. The HisF subunit catalyzes the cyclization activity that produces IGP and AICAR from PRFAR using the ammonia provided by the HisH subunit. The sequence is that of Imidazole glycerol phosphate synthase subunit HisF from Lactiplantibacillus plantarum (strain ATCC BAA-793 / NCIMB 8826 / WCFS1) (Lactobacillus plantarum).